Here is a 397-residue protein sequence, read N- to C-terminus: Enoyl-[acyl-carrier-protein] reductase [NADH] (397 aa).

NAD(+)-binding positions include 48-53 (GASTGY), 74-75 (FE), 111-112 (DA), and 139-140 (VA). Position 225 (Tyr-225) interacts with substrate. The active-site Proton donor is the Tyr-235. Residues Lys-244 and 273–275 (VVT) each bind NAD(+).

The protein belongs to the TER reductase family. Monomer.

The enzyme catalyses a 2,3-saturated acyl-[ACP] + NAD(+) = a (2E)-enoyl-[ACP] + NADH + H(+). Its pathway is lipid metabolism; fatty acid biosynthesis. Its function is as follows. Involved in the final reduction of the elongation cycle of fatty acid synthesis (FAS II). Catalyzes the reduction of a carbon-carbon double bond in an enoyl moiety that is covalently linked to an acyl carrier protein (ACP). In Burkholderia thailandensis (strain ATCC 700388 / DSM 13276 / CCUG 48851 / CIP 106301 / E264), this protein is Enoyl-[acyl-carrier-protein] reductase [NADH].